Here is a 222-residue protein sequence, read N- to C-terminus: Cytidylate kinase (222 aa).

10–18 (GPSASGKGT) is an ATP binding site.

The protein belongs to the cytidylate kinase family. Type 1 subfamily.

Its subcellular location is the cytoplasm. It carries out the reaction CMP + ATP = CDP + ADP. It catalyses the reaction dCMP + ATP = dCDP + ADP. The sequence is that of Cytidylate kinase from Chromobacterium violaceum (strain ATCC 12472 / DSM 30191 / JCM 1249 / CCUG 213 / NBRC 12614 / NCIMB 9131 / NCTC 9757 / MK).